A 174-amino-acid polypeptide reads, in one-letter code: Protein RESISTANCE TO POWDERY MILDEW 8.2 (174 aa).

One can recognise an RPW8 domain in the interval M1–H153. Residues A7–K23 form a helical membrane-spanning segment. Residues V68–M145 adopt a coiled-coil conformation.

Belongs to the plant RPW8 protein family.

The protein localises to the membrane. In terms of biological role, disease resistance (R) protein that induces localized, salicylic acid-dependent defenses. Confers resistance to powdery mildew (e.g. Erysiphe cichoracearum UCSC1). This is Protein RESISTANCE TO POWDERY MILDEW 8.2 from Arabidopsis thaliana (Mouse-ear cress).